The chain runs to 216 residues: Potassium-transporting ATPase KdpC subunit (216 aa).

A helical membrane pass occupies residues 12 to 32 (LLGVSLLVFGLLYQGSLMAIG). Positions 197-207 (QNETDQNSDMN) are enriched in polar residues. The segment at 197-216 (QNETDQNSDMNASEIANGDH) is disordered.

Belongs to the KdpC family. In terms of assembly, the system is composed of three essential subunits: KdpA, KdpB and KdpC. The complex also contains KdpF, a small non-essential subunit.

It is found in the cell membrane. Part of the high-affinity ATP-driven potassium transport (or Kdp) system, which catalyzes the hydrolysis of ATP coupled with the electrogenic transport of potassium into the cytoplasm. This subunit acts as a catalytic chaperone that increases the ATP-binding affinity of the ATP-hydrolyzing subunit KdpB by the formation of a transient KdpB/KdpC/ATP ternary complex. The Kdp system is essential for growth under K(+) limitation, and for survival under desiccation and salt crystal inclusion. This is Potassium-transporting ATPase KdpC subunit from Halobacterium salinarum (strain ATCC 29341 / DSM 671 / R1).